A 264-amino-acid polypeptide reads, in one-letter code: Tryptophan synthase alpha chain (264 aa).

Active-site proton acceptor residues include glutamate 49 and aspartate 60.

This sequence belongs to the TrpA family. Tetramer of two alpha and two beta chains.

The enzyme catalyses (1S,2R)-1-C-(indol-3-yl)glycerol 3-phosphate + L-serine = D-glyceraldehyde 3-phosphate + L-tryptophan + H2O. It participates in amino-acid biosynthesis; L-tryptophan biosynthesis; L-tryptophan from chorismate: step 5/5. The alpha subunit is responsible for the aldol cleavage of indoleglycerol phosphate to indole and glyceraldehyde 3-phosphate. This is Tryptophan synthase alpha chain from Lachnospira eligens (strain ATCC 27750 / DSM 3376 / VPI C15-48 / C15-B4) (Eubacterium eligens).